We begin with the raw amino-acid sequence, 868 residues long: LPS-assembly protein LptD (868 aa).

Positions 1-24 (MLKGIHKYLLMCFGTVLFTVQANA) are cleaved as a signal peptide.

Belongs to the LptD family. In terms of assembly, component of the lipopolysaccharide transport and assembly complex. Interacts with LptE and LptA.

The protein resides in the cell outer membrane. In terms of biological role, together with LptE, is involved in the assembly of lipopolysaccharide (LPS) at the surface of the outer membrane. This is LPS-assembly protein LptD from Francisella tularensis subsp. holarctica (strain LVS).